The following is a 264-amino-acid chain: Thiazole synthase (264 aa).

The active-site Schiff-base intermediate with DXP is Lys106. 1-deoxy-D-xylulose 5-phosphate-binding positions include Gly167, 193 to 194 (AG), and 215 to 216 (NS).

This sequence belongs to the ThiG family. Homotetramer. Forms heterodimers with either ThiH or ThiS.

It is found in the cytoplasm. It catalyses the reaction [ThiS sulfur-carrier protein]-C-terminal-Gly-aminoethanethioate + 2-iminoacetate + 1-deoxy-D-xylulose 5-phosphate = [ThiS sulfur-carrier protein]-C-terminal Gly-Gly + 2-[(2R,5Z)-2-carboxy-4-methylthiazol-5(2H)-ylidene]ethyl phosphate + 2 H2O + H(+). It participates in cofactor biosynthesis; thiamine diphosphate biosynthesis. In terms of biological role, catalyzes the rearrangement of 1-deoxy-D-xylulose 5-phosphate (DXP) to produce the thiazole phosphate moiety of thiamine. Sulfur is provided by the thiocarboxylate moiety of the carrier protein ThiS. In vitro, sulfur can be provided by H(2)S. The protein is Thiazole synthase of Prochlorococcus marinus (strain MIT 9301).